Here is a 257-residue protein sequence, read N- to C-terminus: Metallo-beta-lactamase type 2 (257 aa).

An N-terminal signal peptide occupies residues 1–30 (MKKNTLLKVGLCVSLLGTTQFVSTISSVQA). The Zn(2+) site is built by histidine 116, histidine 118, aspartate 120, histidine 179, and cysteine 198. Residues lysine 201 and asparagine 210 each coordinate substrate. Histidine 240 is a binding site for Zn(2+).

Belongs to the metallo-beta-lactamase superfamily. Class-B beta-lactamase family. Monomer. Zn(2+) is required as a cofactor.

The protein localises to the periplasm. It catalyses the reaction a beta-lactam + H2O = a substituted beta-amino acid. Functionally, confers resistance to the different beta-lactams antibiotics (penicillin, cephalosporin and carbapenem) via the hydrolysis of the beta-lactam ring. The protein is Metallo-beta-lactamase type 2 of Bacillus sp. (strain 170).